Reading from the N-terminus, the 423-residue chain is Transcription factor bHLH14 (423 aa).

A disordered region spans residues 192–243; it reads GKTTKHTNQTGSYPKPAVSDHSKSGNQQFGSERKRRRKLETTRVAAATKEKH. Residues 245-294 form the bHLH domain; it reads PAVLSHVEAEKQRREKLNHRFYALRAIVPKVSRMDKASLLSDAVSYIESL. The tract at residues 312 to 343 is disordered; it reads ETDKLDNSSSNTSPSSVEYQVNQKPSKSNRGS. Low complexity predominate over residues 318–327; that stretch reads NSSSNTSPSS. The span at 328 to 342 shows a compositional bias: polar residues; it reads VEYQVNQKPSKSNRG.

Homodimer.

Its subcellular location is the nucleus. This Arabidopsis thaliana (Mouse-ear cress) protein is Transcription factor bHLH14 (BHLH14).